A 256-amino-acid chain; its full sequence is 5-keto-4-deoxy-D-glucarate aldolase (256 aa).

H50 (proton acceptor) is an active-site residue. Q151 contributes to the substrate binding site. E153 contributes to the Mg(2+) binding site. Substrate contacts are provided by S178 and D179. D179 serves as a coordination point for Mg(2+).

The protein belongs to the HpcH/HpaI aldolase family. KDGluc aldolase subfamily. Homohexamer; trimer of dimers. It depends on Mg(2+) as a cofactor.

The enzyme catalyses 5-dehydro-4-deoxy-D-glucarate = 2-hydroxy-3-oxopropanoate + pyruvate. The catalysed reaction is 2-dehydro-3-deoxy-D-glucarate = 2-hydroxy-3-oxopropanoate + pyruvate. It functions in the pathway carbohydrate acid metabolism; galactarate degradation; D-glycerate from galactarate: step 2/3. Catalyzes the reversible retro-aldol cleavage of both 5-keto-4-deoxy-D-glucarate and 2-keto-3-deoxy-D-glucarate to pyruvate and tartronic semialdehyde. The polypeptide is 5-keto-4-deoxy-D-glucarate aldolase (Shigella sonnei (strain Ss046)).